A 358-amino-acid polypeptide reads, in one-letter code: Trace amine-associated receptor 7e (358 aa).

The Extracellular portion of the chain corresponds to methionine 1 to arginine 47. N-linked (GlcNAc...) asparagine glycosylation is present at asparagine 34. 2 disulfide bridges follow: cysteine 37/cysteine 201 and cysteine 120/cysteine 205. Residues leucine 48–valine 68 traverse the membrane as a helical segment. Residues methionine 69 to asparagine 83 are Cytoplasmic-facing. The chain crosses the membrane as a helical span at residues phenylalanine 84–serine 104. The Extracellular portion of the chain corresponds to methionine 105–lysine 121. The helical transmembrane segment at phenylalanine 122–valine 143 threads the bilayer. The Cytoplasmic portion of the chain corresponds to aspartate 144–lysine 166. A helical transmembrane segment spans residues cysteine 167–alanine 187. Over serine 188 to serine 212 the chain is Extracellular. N-linked (GlcNAc...) asparagine glycosylation is present at asparagine 210. The chain crosses the membrane as a helical span at residues tryptophan 213–serine 233. Residues lysine 234–threonine 274 lie on the Cytoplasmic side of the membrane. A helical transmembrane segment spans residues leucine 275–isoleucine 295. Over aspartate 296–glutamate 309 the chain is Extracellular. The chain crosses the membrane as a helical span at residues isoleucine 310 to phenylalanine 333. Residues arginine 334–glutamate 358 lie on the Cytoplasmic side of the membrane.

The protein belongs to the G-protein coupled receptor 1 family.

Its subcellular location is the cell membrane. In terms of biological role, olfactory receptor specific for N,N-dimethylalkylamines trace amines. Trace amine compounds are enriched in animal body fluids and act on trace amine-associated receptors (TAARs) to elicit both intraspecific and interspecific innate behaviors. Ligand-binding causes a conformation change that triggers signaling via G(s)-class of G alpha proteins (GNAL or GNAS). The sequence is that of Trace amine-associated receptor 7e from Rattus norvegicus (Rat).